Here is a 417-residue protein sequence, read N- to C-terminus: NADH-quinone oxidoreductase subunit D (417 aa).

The protein belongs to the complex I 49 kDa subunit family. NDH-1 is composed of 14 different subunits. Subunits NuoB, C, D, E, F, and G constitute the peripheral sector of the complex.

The protein resides in the cell inner membrane. The catalysed reaction is a quinone + NADH + 5 H(+)(in) = a quinol + NAD(+) + 4 H(+)(out). Functionally, NDH-1 shuttles electrons from NADH, via FMN and iron-sulfur (Fe-S) centers, to quinones in the respiratory chain. The immediate electron acceptor for the enzyme in this species is believed to be ubiquinone. Couples the redox reaction to proton translocation (for every two electrons transferred, four hydrogen ions are translocated across the cytoplasmic membrane), and thus conserves the redox energy in a proton gradient. The polypeptide is NADH-quinone oxidoreductase subunit D (Alkalilimnicola ehrlichii (strain ATCC BAA-1101 / DSM 17681 / MLHE-1)).